A 2156-amino-acid chain; its full sequence is Probable capsid protein 3 (2156 aa).

Residues 1319-1345 (NKSNKSNKSNESDKSSESDKSSESSNH) are disordered. Positions 1326–1345 (KSNESDKSSESDKSSESSNH) are enriched in basic and acidic residues.

This sequence belongs to the NCLDV major capsid protein family.

The protein resides in the virion. The sequence is that of Probable capsid protein 3 from Acanthamoeba polyphaga mimivirus (APMV).